The primary structure comprises 877 residues: Phosphoenolpyruvate carboxylase (877 aa).

Residues H137 and K544 contribute to the active site.

The protein belongs to the PEPCase type 1 family. The cofactor is Mg(2+).

It catalyses the reaction oxaloacetate + phosphate = phosphoenolpyruvate + hydrogencarbonate. Functionally, forms oxaloacetate, a four-carbon dicarboxylic acid source for the tricarboxylic acid cycle. The protein is Phosphoenolpyruvate carboxylase of Edwardsiella ictaluri (strain 93-146).